A 1302-amino-acid polypeptide reads, in one-letter code: Neuroglian (1302 aa).

The signal sequence occupies residues Met1 to Ser23. Over Lys24–Met1138 the chain is Extracellular. Ig-like C2-type domains lie at Pro29–Asn133, Ala134–Gly225, Pro245–Ser330, Pro339–Asn426, Pro432–Thr524, and Thr521–Ile610. Cystine bridges form between Cys59-Cys111, Cys155-Cys212, Cys268-Cys317, and Cys360-Cys410. 2 N-linked (GlcNAc...) asparagine glycosylation sites follow: Asn182 and Asn198. 2 N-linked (GlcNAc...) asparagine glycosylation sites follow: Asn411 and Asn448. Fibronectin type-III domains follow at residues Val614–Asp711, Asn716–Asp813, Ala818–Gly915, Val916–Ala1017, and Ala1021–Gly1119. A disulfide bridge connects residues Cys625 and Cys706. 2 N-linked (GlcNAc...) asparagine glycosylation sites follow: Asn652 and Asn683. A glycan (N-linked (GlcNAc...) asparagine) is linked at Asn821. N-linked (GlcNAc...) asparagine glycosylation is present at Asn1125. A helical membrane pass occupies residues Leu1139 to Ile1154. Residues Arg1155–Val1302 lie on the Cytoplasmic side of the membrane. Residues Gly1172–Phe1182 show a composition bias toward basic and acidic residues. Disordered stretches follow at residues Gly1172–Gly1223 and Val1236–Gly1291. Positions Pro1188–Asn1203 are enriched in polar residues. Low complexity predominate over residues Ala1253–Gly1275.

As to quaternary structure, forms a complex with Nrx-IV/Nrx and Cont. Forms a complex composed of septate junction proteins Nrx-IV/Nrx, Tsf2/MTf, Cont and Nrg during late embryogenesis. As to expression, restricted to the surface of neurons and glia in the developing nervous system. In terms of tissue distribution, restricted to non-neuronal tissues.

Its subcellular location is the cell membrane. It localises to the cell junction. It is found in the septate junction. Its function is as follows. Essential for septate junctions. Septate junctions, which are the equivalent of vertebrate tight junctions, are characterized by regular arrays of transverse structures that span the intermembrane space and form a physical barrier to diffusion. Required for formation of the hemolymph-brain barrier (the insect blood-brain barrier). Vital for embryonic development. Involved in the targeting for degradation or recycling of certain septate junction components, including kune and bou/boudin, by regulating their endocytosis. Functionally, may play a role in neural and glial cell adhesion in the developing embryo. In terms of biological role, may be a more general cell adhesion molecule involved in non-neuronal tissues and imaginal disk morphogenesis. This chain is Neuroglian (Nrg), found in Drosophila melanogaster (Fruit fly).